The chain runs to 670 residues: Lebercilin-like protein (670 aa).

The interval 30 to 51 (KRSPGTGDFSRNSNASNKSVDY) is disordered. The span at 38–51 (FSRNSNASNKSVDY) shows a compositional bias: polar residues. 2 coiled-coil regions span residues 148–259 (LHKI…EREE) and 305–336 (AAQT…IKNI). Residues 374 to 393 (HQGTQKSDVPPLTTKGKKAT) form a disordered region. Residues 420 to 440 (EDSKRKYEDLSGEEKHLEVQI) are a coiled coil. Disordered stretches follow at residues 495 to 516 (RSMQ…YTKG), 557 to 580 (KHLS…SFGK), and 609 to 670 (LKTD…KIII). Composition is skewed to basic and acidic residues over residues 560-572 (SNRE…HSDS) and 621-632 (GSEEPLQSKESH). The segment covering 651–662 (TVVNSIKPSSPT) has biased composition (polar residues).

This sequence belongs to the LCA5 family.

This is Lebercilin-like protein (LCA5L) from Homo sapiens (Human).